The chain runs to 800 residues: Mitochondrial intermediate peptidase (800 aa).

The N-terminal 23 residues, 1–23, are a transit peptide targeting the mitochondrion; that stretch reads MAGHMLMPLRRRPWTCRACLQRL. Residues 27–41 are compositionally biased toward polar residues; it reads RRSLETAASPSSQSD. The disordered stretch occupies residues 27–59; the sequence is RRSLETAASPSSQSDVYDYAPTNHSTQKKSNDE. Zn(2+) is bound at residue histidine 563. The active site involves glutamate 564. Residues histidine 567 and histidine 570 each contribute to the Zn(2+) site.

Belongs to the peptidase M3 family. Requires Zn(2+) as cofactor.

The protein localises to the mitochondrion matrix. The catalysed reaction is Release of an N-terminal octapeptide as second stage of processing of some proteins imported into the mitochondrion.. Its function is as follows. Cleaves proteins, imported into the mitochondrion, to their mature size. While most mitochondrial precursor proteins are processed to the mature form in one step by mitochondrial processing peptidase (MPP), the sequential cleavage by MIP of an octapeptide after initial processing by MPP is a required step for a subgroup of nuclear-encoded precursor proteins destined for the matrix or the inner membrane. The protein is Mitochondrial intermediate peptidase (oct1) of Aspergillus oryzae (strain ATCC 42149 / RIB 40) (Yellow koji mold).